We begin with the raw amino-acid sequence, 176 residues long: Adenine phosphoribosyltransferase (176 aa).

The protein belongs to the purine/pyrimidine phosphoribosyltransferase family. In terms of assembly, homodimer.

It is found in the cytoplasm. It catalyses the reaction AMP + diphosphate = 5-phospho-alpha-D-ribose 1-diphosphate + adenine. It participates in purine metabolism; AMP biosynthesis via salvage pathway; AMP from adenine: step 1/1. In terms of biological role, catalyzes a salvage reaction resulting in the formation of AMP, that is energically less costly than de novo synthesis. This chain is Adenine phosphoribosyltransferase, found in Gluconacetobacter diazotrophicus (strain ATCC 49037 / DSM 5601 / CCUG 37298 / CIP 103539 / LMG 7603 / PAl5).